The following is a 35-amino-acid chain: MAWTAPKLREVNCGMEINMYAPAEDEGGRGTDPIL.

The pyrroloquinoline quinone (Glu-Tyr) cross-link spans 16 to 20 (EINMY).

Belongs to the PqqA family.

It functions in the pathway cofactor biosynthesis; pyrroloquinoline quinone biosynthesis. In terms of biological role, required for coenzyme pyrroloquinoline quinone (PQQ) biosynthesis. PQQ is probably formed by cross-linking a specific glutamate to a specific tyrosine residue and excising these residues from the peptide. This is Coenzyme PQQ synthesis protein A from Ruegeria pomeroyi (strain ATCC 700808 / DSM 15171 / DSS-3) (Silicibacter pomeroyi).